Reading from the N-terminus, the 633-residue chain is Extracellular metalloproteinase 3 (633 aa).

The first 18 residues, 1–18 (MHGLLLAGLLALPMNVLA), serve as a signal peptide directing secretion. The propeptide occupies 19-246 (HPAEQQTSSV…VHNVVDYVAS (228 aa)). A glycan (N-linked (GlcNAc...) asparagine) is linked at asparagine 410. Zn(2+) is bound at residue histidine 429. Residue glutamate 430 is part of the active site. Histidine 433 serves as a coordination point for Zn(2+). Asparagine 480 carries N-linked (GlcNAc...) asparagine glycosylation.

It belongs to the peptidase M36 family. Zn(2+) serves as cofactor.

It localises to the secreted. Secreted metalloproteinase probably acting as a virulence factor. This chain is Extracellular metalloproteinase 3 (MEP3), found in Arthroderma otae (Microsporum canis).